Consider the following 190-residue polypeptide: Potassium-transporting ATPase KdpC subunit (190 aa).

The chain crosses the membrane as a helical span at residues 10–30; sequence TFIFLLLITGGVYPLLTTVLG.

The protein belongs to the KdpC family. The system is composed of three essential subunits: KdpA, KdpB and KdpC.

It localises to the cell inner membrane. Its function is as follows. Part of the high-affinity ATP-driven potassium transport (or Kdp) system, which catalyzes the hydrolysis of ATP coupled with the electrogenic transport of potassium into the cytoplasm. This subunit acts as a catalytic chaperone that increases the ATP-binding affinity of the ATP-hydrolyzing subunit KdpB by the formation of a transient KdpB/KdpC/ATP ternary complex. The polypeptide is Potassium-transporting ATPase KdpC subunit (Escherichia coli (strain 55989 / EAEC)).